The following is a 200-amino-acid chain: Transcription elongation factor A protein-like 6 (200 aa).

A disordered region spans residues 1–200 (MEKPYNKNEG…QRGLHDIPYL (200 aa)). The segment covering 20 to 36 (DEVEPDDEGKSDEEEKP) has biased composition (acidic residues). Serine 30 is modified (phosphoserine). Composition is skewed to basic and acidic residues over residues 37–52 (DAEG…KAEG), 60–80 (LEDK…KPQG), and 115–154 (DRGT…EELR). Serine 65 carries the phosphoserine modification.

Belongs to the TFS-II family. TFA subfamily.

It is found in the nucleus. Its function is as follows. May be involved in transcriptional regulation. The chain is Transcription elongation factor A protein-like 6 (TCEAL6) from Homo sapiens (Human).